A 128-amino-acid polypeptide reads, in one-letter code: MLIEVLKSKIHRATVTEANLNYVGSITIDEELMEAAGILENEKVQVVNINNGERFETYVIKGERGSGTICLNGAAARLVQVGDKVIIMAYCLLTMEEYKTHMPKIVFVDDNNKIVKLSNKEEHSECLC.

Catalysis depends on Ser25, which acts as the Schiff-base intermediate with substrate; via pyruvic acid. Ser25 is subject to Pyruvic acid (Ser). Residue Thr57 participates in substrate binding. The Proton donor role is filled by Tyr58. 73–75 contributes to the substrate binding site; it reads GAA.

Belongs to the PanD family. In terms of assembly, heterooctamer of four alpha and four beta subunits. It depends on pyruvate as a cofactor. In terms of processing, is synthesized initially as an inactive proenzyme, which is activated by self-cleavage at a specific serine bond to produce a beta-subunit with a hydroxyl group at its C-terminus and an alpha-subunit with a pyruvoyl group at its N-terminus.

It is found in the cytoplasm. The catalysed reaction is L-aspartate + H(+) = beta-alanine + CO2. The protein operates within cofactor biosynthesis; (R)-pantothenate biosynthesis; beta-alanine from L-aspartate: step 1/1. Its function is as follows. Catalyzes the pyruvoyl-dependent decarboxylation of aspartate to produce beta-alanine. In Caldicellulosiruptor saccharolyticus (strain ATCC 43494 / DSM 8903 / Tp8T 6331), this protein is Aspartate 1-decarboxylase.